Here is a 371-residue protein sequence, read N- to C-terminus: Peptide chain release factor 2 (371 aa).

An N5-methylglutamine modification is found at glutamine 252.

It belongs to the prokaryotic/mitochondrial release factor family. In terms of processing, methylated by PrmC. Methylation increases the termination efficiency of RF2.

The protein localises to the cytoplasm. Functionally, peptide chain release factor 2 directs the termination of translation in response to the peptide chain termination codons UGA and UAA. In Staphylococcus epidermidis (strain ATCC 35984 / DSM 28319 / BCRC 17069 / CCUG 31568 / BM 3577 / RP62A), this protein is Peptide chain release factor 2.